Consider the following 309-residue polypeptide: Succinoglycan biosynthesis protein ExoM (309 aa).

Belongs to the glycosyltransferase 2 family.

Its subcellular location is the cell inner membrane. It participates in glycan metabolism; exopolysaccharide biosynthesis. Its function is as follows. Glycosyltransferase required for the synthesis of succinoglycan (EPS I). Needed for the addition of the fourth sugar (glucose), catalyzes the formation of a beta-1,4 linkage between the third acetylated sugar and the fourth sugar. This is Succinoglycan biosynthesis protein ExoM (exoM) from Rhizobium meliloti (strain 1021) (Ensifer meliloti).